Consider the following 76-residue polypeptide: Bomanin Tailed 2 (76 aa).

Residues Met-1–Ala-22 form the signal peptide. A propeptide spans Thr-23–Pro-24 (removed by a dipeptidylpeptidase). A disulfide bridge links Cys-33 with Cys-36.

It belongs to the bomanin family.

It localises to the secreted. Secreted immune-induced peptide induced by Toll signaling. Has a role in resistance to bacterial and fungal infections. The strength of antimicrobial activity appears to correlate with the overall level of expression. The sequence is that of Bomanin Tailed 2 from Drosophila melanogaster (Fruit fly).